Here is a 587-residue protein sequence, read N- to C-terminus: Tyrosine-protein kinase transforming protein Src (587 aa).

A disordered region spans residues 1 to 58 (MGSSKSKPKDPSQRRRSLEPPDSTHHGGFPASQTPNKTAAPDTHRTPSRSFGTVATEP). Gly2 is lipidated: N-myristoyl glycine; by host. Residues 7 to 25 (KPKDPSQRRRSLEPPDSTH) are compositionally biased toward basic and acidic residues. The SH3 domain maps to 81 to 142 (GGVTTFVALY…PSNYVAPSDS (62 aa)). One can recognise an SH2 domain in the interval 148 to 245 (WYFGKITRRE…GLCHRLTNVC (98 aa)). Residues 267–520 (LRLEVKLGQG…YLQAFLEDYF (254 aa)) form the Protein kinase domain. ATP is bound by residues 273-281 (LGQGCFGEV) and Lys295. Asp386 (proton acceptor) is an active-site residue. Tyr416 is modified (phosphotyrosine; by autocatalysis).

Belongs to the protein kinase superfamily. Tyr protein kinase family. SRC subfamily. The phosphorylated form is termed pp60v-src.

It carries out the reaction L-tyrosyl-[protein] + ATP = O-phospho-L-tyrosyl-[protein] + ADP + H(+). Its function is as follows. This phosphoprotein, required for both the initiation and the maintenance of neoplastic transformation, is a protein kinase that catalyzes the phosphorylation of tyrosine residues in vitro. In Galliformes, this protein is Tyrosine-protein kinase transforming protein Src (V-SRC).